Reading from the N-terminus, the 442-residue chain is Endothelin receptor type B (442 aa).

A signal peptide spans 1–26 (MQPPPSLCGRALVALVLACGLSRIWG). Topologically, residues 27–101 (EERGFPPDRA…GPIEIKETFK (75 aa)) are extracellular. Asn-59 carries an N-linked (GlcNAc...) asparagine glycan. The interval 69-88 (AEVPKGDRTAGSPPRTISPP) is disordered. Residues 102–126 (YINTVVSCLVFVLGIIGNSTLLRII) traverse the membrane as a helical segment. The Cytoplasmic portion of the chain corresponds to 127 to 137 (YKNKCMRNGPN). A helical transmembrane segment spans residues 138 to 163 (ILIASLALGDLLHIVIDIPINVYKLL). The Extracellular segment spans residues 164 to 175 (AEDWPFGAEMCK). An intrachain disulfide couples Cys-174 to Cys-255. A helical membrane pass occupies residues 176–197 (LVPFIQKASVGITVLSLCALSI). Topologically, residues 198-218 (DRYRAVASWSRIKGIGVPKWT) are cytoplasmic. Residues 219–243 (AVEIVLIWVVSVVLAVPEAIGFDII) form a helical membrane-spanning segment. Residues 244–271 (TMDYKGSYLRICLLHPVQKTAFMQFYKT) lie on the Extracellular side of the membrane. Residues 272–296 (AKDWWLFSFYFCLPLAITAFFYTLM) form a helical membrane-spanning segment. At 297–324 (TCEMLRKKSGMQIALNDHLKQRREVAKT) the chain is on the cytoplasmic side. At Ser-305 the chain carries Phosphoserine. A helical transmembrane segment spans residues 325–350 (VFCLVLVFALCWLPLHLSRILKLTLY). At 351 to 362 (NQNDPNRCELLS) the chain is on the extracellular side. A helical transmembrane segment spans residues 363-389 (FLLVLDYIGINMASLNSCINPIALYLV). Residues 390 to 442 (SKRFKNCFKSCLCCWCQSFEEKQSLEEKQSCLKFKANDHGYDNFRSSNKYSSS) are Cytoplasmic-facing. Residues Cys-402, Cys-403, and Cys-405 are each lipidated (S-palmitoyl cysteine). Ser-419 carries the phosphoserine modification. Tyr-439 carries the phosphotyrosine modification. Phosphoserine occurs at positions 440, 441, and 442.

The protein belongs to the G-protein coupled receptor 1 family. Endothelin receptor subfamily. EDNRB sub-subfamily. In terms of processing, palmitoylation of Cys-402 was confirmed by the palmitoylation of Cys-402 in a deletion mutant lacking both Cys-403 and Cys-405. As to expression, expressed in placental stem villi vessels, but not in cultured placental villi smooth muscle cells.

It localises to the cell membrane. Its function is as follows. Non-specific receptor for endothelin 1, 2, and 3. Mediates its action by association with G proteins that activate a phosphatidylinositol-calcium second messenger system. The sequence is that of Endothelin receptor type B from Homo sapiens (Human).